An 894-amino-acid chain; its full sequence is Alanine--tRNA ligase (894 aa).

Zn(2+)-binding residues include histidine 587, histidine 591, cysteine 691, and histidine 695. Residues 739–758 (AEGDRAAEEAKGRLQEERDA) form a disordered region.

It belongs to the class-II aminoacyl-tRNA synthetase family. Zn(2+) serves as cofactor.

It is found in the cytoplasm. The enzyme catalyses tRNA(Ala) + L-alanine + ATP = L-alanyl-tRNA(Ala) + AMP + diphosphate. In terms of biological role, catalyzes the attachment of alanine to tRNA(Ala) in a two-step reaction: alanine is first activated by ATP to form Ala-AMP and then transferred to the acceptor end of tRNA(Ala). Also edits incorrectly charged Ser-tRNA(Ala) and Gly-tRNA(Ala) via its editing domain. The polypeptide is Alanine--tRNA ligase (Cenarchaeum symbiosum (strain A)).